Here is a 329-residue protein sequence, read N- to C-terminus: Palmitoyltransferase pfa3 (329 aa).

The next 5 helical transmembrane spans lie at V14–V34, V49–L69, F141–F161, A177–M197, and I243–V263. Residues R97–F147 enclose the DHHC domain.

The protein belongs to the DHHC palmitoyltransferase family. PFA3 subfamily. Autopalmitoylated.

The protein resides in the vacuole membrane. It localises to the golgi apparatus membrane. It carries out the reaction L-cysteinyl-[protein] + hexadecanoyl-CoA = S-hexadecanoyl-L-cysteinyl-[protein] + CoA. Functionally, palmitoyltransferase specific for VAC8. Palmitoylates VAC8 at one or more of its N-terminal cysteine residues, which is required for its proper membrane localization. This chain is Palmitoyltransferase pfa3 (pfa3), found in Schizosaccharomyces pombe (strain 972 / ATCC 24843) (Fission yeast).